The primary structure comprises 455 residues: Gamma-aminobutyric acid receptor subunit alpha-1 (455 aa).

The N-terminal stretch at 1 to 27 (MKKSRGLSDYLWAWTLILSTLSGRSYG) is a signal peptide. The Extracellular portion of the chain corresponds to 28 to 252 (QPSQDELKDN…FHLKRKIGYF (225 aa)). Asn-37 carries N-linked (GlcNAc...) asparagine glycosylation. Arg-93 is a 4-aminobutanoate binding site. An N-linked (GlcNAc...) asparagine glycan is attached at Asn-137. Residue Thr-156 participates in 4-aminobutanoate binding. The cysteines at positions 165 and 179 are disulfide-linked. The chain crosses the membrane as a helical span at residues 253–273 (VIQTYLPCIMTVILSQVSFWL). The Cytoplasmic segment spans residues 274-278 (NRESV). A helical transmembrane segment spans residues 279–300 (PARTVFGVTTVLTMTTLSISAR). Residues 301 to 310 (NSLPKVAYAT) lie on the Extracellular side of the membrane. Residues 311–332 (AMDWFIAVCYAFVFSALIEFAT) form a helical membrane-spanning segment. At 333–420 (VNYFTKRGYA…TFNSVSKIDR (88 aa)) the chain is on the cytoplasmic side. A helical membrane pass occupies residues 421–440 (LSRIAFPLLFGIFNLVYWAT). Topologically, residues 441-455 (YLNREPQLKAPTPHQ) are extracellular.

The protein belongs to the ligand-gated ion channel (TC 1.A.9) family. Gamma-aminobutyric acid receptor (TC 1.A.9.5) subfamily. GABRA1 sub-subfamily. In terms of assembly, heteropentamer, formed by a combination of alpha (GABRA1-6), beta (GABRB1-3), gamma (GABRG1-3), delta (GABRD), epsilon (GABRE), rho (GABRR1-3), pi (GABRP) and theta (GABRQ) subunits, each subunit exhibiting distinct physiological and pharmacological properties. Interacts with UBQLN1. Interacts with TRAK1. Interacts with KIF21B. Identified in a complex of 720 kDa composed of LHFPL4, NLGN2, GABRA1, GABRB2, GABRG2 and GABRB3. Interacts with LHFPL4. Interacts with NLGN2. Interacts with SHISA7; interaction leads to the regulation of GABA(A) receptor trafficking, channel deactivation kinetics and pharmacology. Post-translationally, glycosylated. Expressed in the cerebellum.

It localises to the postsynaptic cell membrane. The protein resides in the cell membrane. It is found in the cytoplasmic vesicle membrane. The enzyme catalyses chloride(in) = chloride(out). Allosterically activated by benzodiazepines, the neuroanesthetic alphaxalone and pentobarbital. Inhibited by the antagonist bicuculline. Potentiated by histamine. Its function is as follows. Alpha subunit of the heteropentameric ligand-gated chloride channel gated by Gamma-aminobutyric acid (GABA), a major inhibitory neurotransmitter in the brain. GABA-gated chloride channels, also named GABA(A) receptors (GABAAR), consist of five subunits arranged around a central pore and contain GABA active binding site(s) located at the alpha and beta subunit interface(s). When activated by GABA, GABAARs selectively allow the flow of chloride anions across the cell membrane down their electrochemical gradient. Alpha-1/GABRA1-containing GABAARs are largely synaptic. Chloride influx into the postsynaptic neuron following GABAAR opening decreases the neuron ability to generate a new action potential, thereby reducing nerve transmission. GABAARs containing alpha-1 and beta-2 or -3 subunits exhibit synaptogenic activity; the gamma-2 subunit being necessary but not sufficient to induce rapid synaptic contacts formation. GABAARs function also as histamine receptor where histamine binds at the interface of two neighboring beta subunits and potentiates GABA response. GABAARs containing alpha, beta and epsilon subunits also permit spontaneous chloride channel activity while preserving the structural information required for GABA-gated openings. Alpha-1-mediated plasticity in the orbitofrontal cortex regulates context-dependent action selection. Together with rho subunits, may also control neuronal and glial GABAergic transmission in the cerebellum. The chain is Gamma-aminobutyric acid receptor subunit alpha-1 from Mus musculus (Mouse).